The primary structure comprises 621 residues: Chaperone protein HtpG (621 aa).

Positions 1–328 are a; substrate-binding; the sequence is MIQEKKKFDA…SEDLPLNISR (328 aa). The interval 329–544 is b; it reads ESLQHNSVLE…DAAMDIRMER (216 aa). Residues 475–494 form a disordered region; sequence SDIDVEQTTSQSEAKNTDSK. The tract at residues 545–621 is c; that stretch reads FLIEQKQIAN…LNDIVQKAIL (77 aa).

This sequence belongs to the heat shock protein 90 family. Homodimer.

The protein resides in the cytoplasm. Molecular chaperone. Has ATPase activity. This is Chaperone protein HtpG from Rickettsia rickettsii (strain Iowa).